Here is a 120-residue protein sequence, read N- to C-terminus: Cytochrome b5 (120 aa).

One can recognise a Cytochrome b5 heme-binding domain in the interval 2 to 78 (PKVYSYQEVA…LKGLYIGDVD (77 aa)). 2 residues coordinate heme: His-37 and His-61. Residues 98–118 (GSGTLVVILAILMLGVAYYLL) traverse the membrane as a helical segment.

It belongs to the cytochrome b5 family.

The protein localises to the endoplasmic reticulum membrane. It localises to the microsome membrane. Membrane bound hemoprotein which function as an electron carrier for several membrane bound oxygenases. It plays a role in fatty-acid desaturation and is also involved in several steps of the sterol biosynthesis pathway, particularly in the 4-demethylation of the 4,4'-dimethyl zymosterol. The polypeptide is Cytochrome b5 (CYB5) (Saccharomyces cerevisiae (strain ATCC 204508 / S288c) (Baker's yeast)).